The primary structure comprises 211 residues: Phosphatidylglycerophosphatase C (211 aa).

Topologically, residues 1–33 (MATHERRVVFFDLDGTLHQQDMFGSFLRYLLRR) are cytoplasmic. Residues 34 to 54 (QPLNALLVLPLLPIIAIALLI) form a helical membrane-spanning segment. Topologically, residues 55 to 211 (KGRAARWPMS…TPRGELQQLE (157 aa)) are periplasmic.

The cofactor is Mg(2+).

Its subcellular location is the cell inner membrane. The catalysed reaction is a 1,2-diacyl-sn-glycero-3-phospho-(1'-sn-glycero-3'-phosphate) + H2O = a 1,2-diacyl-sn-glycero-3-phospho-(1'-sn-glycerol) + phosphate. Its pathway is phospholipid metabolism; phosphatidylglycerol biosynthesis; phosphatidylglycerol from CDP-diacylglycerol: step 2/2. Its function is as follows. Lipid phosphatase which dephosphorylates phosphatidylglycerophosphate (PGP) to phosphatidylglycerol (PG). This Escherichia coli (strain K12) protein is Phosphatidylglycerophosphatase C (pgpC).